The chain runs to 215 residues: Glutathione S-transferase F10 (215 aa).

The GST N-terminal domain maps to 2-81 (VLTIYAPLFA…YIAEKYRSQG (80 aa)). Residues 11-12 (AS), 39-40 (QR), 52-53 (KI), and 65-66 (ES) each bind glutathione. The GST C-terminal domain occupies 88–215 (TIEERGQVEQ…EVSAKYSLPV (128 aa)).

This sequence belongs to the GST superfamily. Phi family. In terms of assembly, interacts with BAK1. In terms of tissue distribution, expressed in roots, stems, floral buds, mature flowers and leaves.

The protein resides in the cytoplasm. Its subcellular location is the cytosol. It catalyses the reaction RX + glutathione = an S-substituted glutathione + a halide anion + H(+). In vitro, possesses glutathione S-transferase activity toward 1-chloro-2,4-dinitrobenzene (CDNB) and benzyl isothiocyanate (BITC). May be involved in the conjugation of reduced glutathione to a wide number of exogenous and endogenous hydrophobic electrophiles and have a detoxification role against certain herbicides. This Arabidopsis thaliana (Mouse-ear cress) protein is Glutathione S-transferase F10.